A 122-amino-acid chain; its full sequence is Protein C10 (122 aa).

It belongs to the UPF0456 family.

The protein resides in the cytoplasm. The chain is Protein C10 from Danio rerio (Zebrafish).